A 374-amino-acid chain; its full sequence is MKFAWLLAPDTYWDEKKTFITAALESGIDHIVDTADSGRIKKLGNLTLISPDEDADIVLVGRDGEGDGTLELPETLEYSRDIEMASELSESGRQVAAYVEIRSKAHEELARRLGRVVDYLILVGEDWKIIPLENIIADLQEEDVKLIAAVADVDEARVALETLEHGTDGVLIEPADISQIKDIAALLENIESETYELKPATITRIEPIGSGDRVCVDTCSIMGIGEGMLVGSYSQGLFLVHSESLESEYVASRPFRVNAGPVQAYVMVPGGRTRYLSELETGDEVIIVDRDGRSRSAIVGRVKIEKRPLMLVEAEYEGMKVRTLLQNAETIRLVNDKGEPVSVSELGEGDRVLVYFDESARHFGMAIKETIIEK.

The protein belongs to the archaeal-type DHQ synthase family.

It carries out the reaction 2-amino-2,3,7-trideoxy-D-lyxo-hept-6-ulosonate + NAD(+) + H2O = 3-dehydroquinate + NH4(+) + NADH + H(+). Its function is as follows. Catalyzes the oxidative deamination and cyclization of 2-amino-3,7-dideoxy-D-threo-hept-6-ulosonic acid (ADH) to yield 3-dehydroquinate (DHQ), which is fed into the canonical shikimic pathway of aromatic amino acid biosynthesis. This chain is 3-dehydroquinate synthase, found in Methanothermobacter thermautotrophicus (strain ATCC 29096 / DSM 1053 / JCM 10044 / NBRC 100330 / Delta H) (Methanobacterium thermoautotrophicum).